A 463-amino-acid chain; its full sequence is Chaperone SurA (463 aa).

The N-terminal stretch at 1-25 is a signal peptide; sequence MTKPFSVLLASLLVITSTVSPLASA. PpiC domains follow at residues 174–276 and 289–388; these read GSQY…KLVE and LTEY…QRVG. Disordered regions lie at residues 329-348 and 434-463; these read ATAK…GDLG and GDRA…QPTR. A compositionally biased stretch (low complexity) spans 440 to 452; it reads DATAAPEPAAAPA. A compositionally biased stretch (pro residues) spans 453-463; sequence APTPPPAQPTR.

The protein localises to the periplasm. The enzyme catalyses [protein]-peptidylproline (omega=180) = [protein]-peptidylproline (omega=0). Chaperone involved in the correct folding and assembly of outer membrane proteins. Recognizes specific patterns of aromatic residues and the orientation of their side chains, which are found more frequently in integral outer membrane proteins. May act in both early periplasmic and late outer membrane-associated steps of protein maturation. The sequence is that of Chaperone SurA from Xanthomonas campestris pv. campestris (strain 8004).